The following is a 1887-amino-acid chain: Protein TIC 214 (1887 aa).

6 consecutive transmembrane segments (helical) span residues 18–38, 64–84, 87–107, 124–144, 172–192, and 221–241; these read IINSVVVVGLYYGFLTTFSIG, FITGQLMMFISIYYAPLHLAL, PHTITVLALPYLLFHFFWNNH, LSIQCVFLNNLIFQLFNHFIL, VGWLIGHILFMKWLGLVLVWI, and IFSILLFITCVYYLGRIPSPI. 3 disordered regions span residues 248–300, 785–805, and 1569–1603; these read EASK…EGWD, REEQTKREEKKEKDKKEDNKR, and LPSNKKIKNRSQETKEPPSQRERGSDIENKGNLSP. Over residues 256-268 the composition is skewed to acidic residues; the sequence is VESEEERDVEIET. Over residues 1578-1597 the composition is skewed to basic and acidic residues; sequence RSQETKEPPSQRERGSDIEN.

The protein belongs to the TIC214 family. In terms of assembly, part of the Tic complex.

It localises to the plastid. The protein resides in the chloroplast inner membrane. Functionally, involved in protein precursor import into chloroplasts. May be part of an intermediate translocation complex acting as a protein-conducting channel at the inner envelope. In Solanum tuberosum (Potato), this protein is Protein TIC 214.